The chain runs to 367 residues: Germination protease (367 aa).

Residues Met1–Asp15 constitute a propeptide that is removed on maturation.

This sequence belongs to the peptidase A25 family. Homotetramer. Autoproteolytically processed. The inactive tetrameric zymogen termed p46 autoprocesses to a smaller form termed p41, which is active only during spore germination.

The catalysed reaction is Endopeptidase action with P4 Glu or Asp, P1 preferably Glu &gt; Asp, P1' hydrophobic and P2' Ala.. Its function is as follows. Initiates the rapid degradation of small, acid-soluble proteins during spore germination. In Bacillus cereus (strain B4264), this protein is Germination protease.